The sequence spans 199 residues: Isopentenyl-diphosphate Delta-isomerase (199 aa).

Mn(2+) contacts are provided by histidine 40 and histidine 47. One can recognise a Nudix hydrolase domain in the interval 45 to 186 (PRHLAFSCHV…PALLSPWAVE (142 aa)). Cysteine 82 is a catalytic residue. Cysteine 82 serves as a coordination point for Mg(2+). A Mn(2+)-binding site is contributed by histidine 84. Glutamate 102 lines the Mg(2+) pocket. 2 residues coordinate Mn(2+): glutamate 131 and glutamate 133. Glutamate 133 is a catalytic residue.

Belongs to the IPP isomerase type 1 family. It depends on Mg(2+) as a cofactor. Requires Mn(2+) as cofactor.

It is found in the cytoplasm. The catalysed reaction is isopentenyl diphosphate = dimethylallyl diphosphate. The protein operates within isoprenoid biosynthesis; dimethylallyl diphosphate biosynthesis; dimethylallyl diphosphate from isopentenyl diphosphate: step 1/1. Catalyzes the 1,3-allylic rearrangement of the homoallylic substrate isopentenyl (IPP) to its highly electrophilic allylic isomer, dimethylallyl diphosphate (DMAPP). This is Isopentenyl-diphosphate Delta-isomerase from Cutibacterium acnes (strain DSM 16379 / KPA171202) (Propionibacterium acnes).